The chain runs to 601 residues: Probable inactive receptor kinase At1g27190 (601 aa).

The first 24 residues, 1–24 (MKKIFITLLWLLFISSFLCSSSSA), serve as a signal peptide directing secretion. N52 carries an N-linked (GlcNAc...) asparagine glycan. LRR repeat units lie at residues 73 to 95 (RIIS…LKLC), 97 to 119 (SLQS…ICSW), 122 to 144 (YLVT…IVEC), 146 to 169 (FLNA…SRLD), and 170 to 192 (RLRR…LARF). Residues 221-241 (IIIVAGVLGAVGSLCVGLVIF) traverse the membrane as a helical segment. T298 bears the Phosphothreonine mark. A Protein kinase domain is found at 301 to 586 (FSSGNIDVSS…KNMADKHGVS (286 aa)). Residues 307 to 315 (DVSSRTGVS) and K329 each bind ATP. Residue S383 is modified to Phosphoserine. At T399 the chain carries Phosphothreonine. The residue at position 476 (Y476) is a Phosphotyrosine. S478 is modified (phosphoserine). T479 bears the Phosphothreonine mark. A phosphoserine mark is found at S483 and S586.

This sequence belongs to the protein kinase superfamily. Ser/Thr protein kinase family.

The protein resides in the membrane. This is Probable inactive receptor kinase At1g27190 from Arabidopsis thaliana (Mouse-ear cress).